A 100-amino-acid chain; its full sequence is NADH-quinone oxidoreductase subunit K 2 (100 aa).

A run of 3 helical transmembrane segments spans residues 4 to 24 (LWWF…GVLL), 28 to 48 (ILVV…NFIA), and 60 to 80 (IFAI…LGIL).

It belongs to the complex I subunit 4L family. In terms of assembly, NDH-1 is composed of 14 different subunits. Subunits NuoA, H, J, K, L, M, N constitute the membrane sector of the complex.

The protein resides in the cell inner membrane. The catalysed reaction is a quinone + NADH + 5 H(+)(in) = a quinol + NAD(+) + 4 H(+)(out). In terms of biological role, NDH-1 shuttles electrons from NADH, via FMN and iron-sulfur (Fe-S) centers, to quinones in the respiratory chain. The immediate electron acceptor for the enzyme in this species is believed to be ubiquinone. Couples the redox reaction to proton translocation (for every two electrons transferred, four hydrogen ions are translocated across the cytoplasmic membrane), and thus conserves the redox energy in a proton gradient. This is NADH-quinone oxidoreductase subunit K 2 from Rhizobium etli (strain CIAT 652).